Reading from the N-terminus, the 236-residue chain is Uridylate kinase (236 aa).

10 to 13 is a binding site for ATP; it reads KLSG. Gly-52 lines the UMP pocket. Positions 53 and 57 each coordinate ATP. UMP-binding positions include Asp-72 and 133 to 140; that span reads TGNPFFTT. ATP-binding residues include Thr-160, Tyr-166, and Asp-169.

It belongs to the UMP kinase family. In terms of assembly, homohexamer.

The protein resides in the cytoplasm. The enzyme catalyses UMP + ATP = UDP + ADP. It participates in pyrimidine metabolism; CTP biosynthesis via de novo pathway; UDP from UMP (UMPK route): step 1/1. Inhibited by UTP. In terms of biological role, catalyzes the reversible phosphorylation of UMP to UDP. The polypeptide is Uridylate kinase (Cupriavidus metallidurans (strain ATCC 43123 / DSM 2839 / NBRC 102507 / CH34) (Ralstonia metallidurans)).